We begin with the raw amino-acid sequence, 347 residues long: Selenide, water dikinase (347 aa).

Residue C16 is part of the active site. Residues K19 and 47 to 49 (TRD) each bind ATP. D50 lines the Mg(2+) pocket. ATP-binding positions include D67, D90, and 138-140 (GHS). Residue D90 coordinates Mg(2+). D226 is a binding site for Mg(2+).

Belongs to the selenophosphate synthase 1 family. Class I subfamily. Homodimer. It depends on Mg(2+) as a cofactor.

The catalysed reaction is hydrogenselenide + ATP + H2O = selenophosphate + AMP + phosphate + 2 H(+). Functionally, synthesizes selenophosphate from selenide and ATP. The polypeptide is Selenide, water dikinase (Photorhabdus laumondii subsp. laumondii (strain DSM 15139 / CIP 105565 / TT01) (Photorhabdus luminescens subsp. laumondii)).